Here is a 239-residue protein sequence, read N- to C-terminus: Beta-glucanase (239 aa).

The N-terminal stretch at 1–25 (MKRVLLILVTGLFMSLCGITSSVSA) is a signal peptide. Residues 26–239 (QTGGSFFEPF…HYDWMRYRKK (214 aa)) enclose the GH16 domain. C57 and C86 are oxidised to a cystine. E134 functions as the Nucleophile in the catalytic mechanism.

This sequence belongs to the glycosyl hydrolase 16 family.

The enzyme catalyses Hydrolysis of (1-&gt;4)-beta-D-glucosidic linkages in beta-D-glucans containing (1-&gt;3)- and (1-&gt;4)-bonds.. This is Beta-glucanase (bglA) from Bacillus amyloliquefaciens (Bacillus velezensis).